We begin with the raw amino-acid sequence, 74 residues long: Putative membrane protein insertion efficiency factor (74 aa).

This sequence belongs to the UPF0161 family.

It localises to the cell inner membrane. In terms of biological role, could be involved in insertion of integral membrane proteins into the membrane. The protein is Putative membrane protein insertion efficiency factor of Leptospira interrogans serogroup Icterohaemorrhagiae serovar copenhageni (strain Fiocruz L1-130).